A 564-amino-acid chain; its full sequence is Dihydroxy-acid dehydratase (564 aa).

Residue cysteine 53 participates in [2Fe-2S] cluster binding. Aspartate 85 is a binding site for Mg(2+). Cysteine 126 lines the [2Fe-2S] cluster pocket. Mg(2+) is bound by residues aspartate 127 and lysine 128. Lysine 128 carries the post-translational modification N6-carboxylysine. Cysteine 203 contributes to the [2Fe-2S] cluster binding site. Glutamate 454 contributes to the Mg(2+) binding site. Catalysis depends on serine 480, which acts as the Proton acceptor.

Belongs to the IlvD/Edd family. Homodimer. It depends on [2Fe-2S] cluster as a cofactor. The cofactor is Mg(2+).

The catalysed reaction is (2R)-2,3-dihydroxy-3-methylbutanoate = 3-methyl-2-oxobutanoate + H2O. It carries out the reaction (2R,3R)-2,3-dihydroxy-3-methylpentanoate = (S)-3-methyl-2-oxopentanoate + H2O. The protein operates within amino-acid biosynthesis; L-isoleucine biosynthesis; L-isoleucine from 2-oxobutanoate: step 3/4. It participates in amino-acid biosynthesis; L-valine biosynthesis; L-valine from pyruvate: step 3/4. Functionally, functions in the biosynthesis of branched-chain amino acids. Catalyzes the dehydration of (2R,3R)-2,3-dihydroxy-3-methylpentanoate (2,3-dihydroxy-3-methylvalerate) into 2-oxo-3-methylpentanoate (2-oxo-3-methylvalerate) and of (2R)-2,3-dihydroxy-3-methylbutanoate (2,3-dihydroxyisovalerate) into 2-oxo-3-methylbutanoate (2-oxoisovalerate), the penultimate precursor to L-isoleucine and L-valine, respectively. This Clavibacter michiganensis subsp. michiganensis (strain NCPPB 382) protein is Dihydroxy-acid dehydratase.